A 210-amino-acid chain; its full sequence is Secreted isochorismatase effector Isc1 (210 aa).

Catalysis depends on residues Asp25, Lys90, and Cys124.

The protein belongs to the isochorismatase family.

The protein localises to the secreted. It is found in the host cytoplasm. It localises to the host nucleus. It catalyses the reaction isochorismate + H2O = (2S,3S)-2,3-dihydroxy-2,3-dihydrobenzoate + pyruvate. Secreted isochorismatase required for full virulence of P.sojae. Suppresses salicylate-mediated innate immunity of the host by disrupting the plant salicylate metabolism pathway via hydrolysis of its isochorismate precursor. The sequence is that of Secreted isochorismatase effector Isc1 from Phytophthora sojae (strain P6497) (Soybean stem and root rot agent).